Reading from the N-terminus, the 148-residue chain is 3-hydroxyacyl-[acyl-carrier-protein] dehydratase FabZ (148 aa).

The active site involves His-48.

This sequence belongs to the thioester dehydratase family. FabZ subfamily.

It localises to the cytoplasm. The enzyme catalyses a (3R)-hydroxyacyl-[ACP] = a (2E)-enoyl-[ACP] + H2O. In terms of biological role, involved in unsaturated fatty acids biosynthesis. Catalyzes the dehydration of short chain beta-hydroxyacyl-ACPs and long chain saturated and unsaturated beta-hydroxyacyl-ACPs. The sequence is that of 3-hydroxyacyl-[acyl-carrier-protein] dehydratase FabZ from Campylobacter fetus subsp. fetus (strain 82-40).